The following is a 102-amino-acid chain: Small ribosomal subunit protein uS17 (102 aa).

The disordered stretch occupies residues 1–27 (MEQTEEHTDTHTDEQDEAVDRNDRKER).

Belongs to the universal ribosomal protein uS17 family. As to quaternary structure, part of the 30S ribosomal subunit.

Functionally, one of the primary rRNA binding proteins, it binds specifically to the 5'-end of 16S ribosomal RNA. This Salinibacter ruber (strain DSM 13855 / M31) protein is Small ribosomal subunit protein uS17.